Here is a 536-residue protein sequence, read N- to C-terminus: CTP synthase (536 aa).

An amidoligase domain region spans residues 1–267; sequence MSKFVFVTGG…CKETLNYLEL (267 aa). Serine 13 lines the CTP pocket. UTP is bound at residue serine 13. Residues 14 to 19 and aspartate 71 contribute to the ATP site; that span reads SIGKGI. Positions 71 and 141 each coordinate Mg(2+). CTP-binding positions include 148–150, 188–193, and lysine 224; these read DIE and KTKPTQ. UTP is bound by residues 188-193 and lysine 224; that span reads KTKPTQ. One can recognise a Glutamine amidotransferase type-1 domain in the interval 292–534; sequence KVALVGKYIE…IKASQDKLTQ (243 aa). An L-glutamine-binding site is contributed by glycine 354. The Nucleophile; for glutamine hydrolysis role is filled by cysteine 381. L-glutamine contacts are provided by residues 382–385, glutamate 405, and arginine 462; that span reads LGMQ. Residues histidine 507 and glutamate 509 contribute to the active site.

It belongs to the CTP synthase family. Homotetramer.

The enzyme catalyses UTP + L-glutamine + ATP + H2O = CTP + L-glutamate + ADP + phosphate + 2 H(+). It carries out the reaction L-glutamine + H2O = L-glutamate + NH4(+). It catalyses the reaction UTP + NH4(+) + ATP = CTP + ADP + phosphate + 2 H(+). Its pathway is pyrimidine metabolism; CTP biosynthesis via de novo pathway; CTP from UDP: step 2/2. Its activity is regulated as follows. Allosterically activated by GTP, when glutamine is the substrate; GTP has no effect on the reaction when ammonia is the substrate. The allosteric effector GTP functions by stabilizing the protein conformation that binds the tetrahedral intermediate(s) formed during glutamine hydrolysis. Inhibited by the product CTP, via allosteric rather than competitive inhibition. Catalyzes the ATP-dependent amination of UTP to CTP with either L-glutamine or ammonia as the source of nitrogen. Regulates intracellular CTP levels through interactions with the four ribonucleotide triphosphates. The sequence is that of CTP synthase from Prochlorococcus marinus (strain MIT 9301).